The following is a 222-amino-acid chain: Collectrin (222 aa).

A signal peptide spans 1-14; sequence MLWLLFFLVTAIHA. The Extracellular portion of the chain corresponds to 15–141; that stretch reads ELCQPGAENA…LAPPMDPSVP (127 aa). One can recognise a Collectrin-like domain in the interval 21–222; that stretch reads AENAFKVRLS…MTEDERLTPL (202 aa). N-linked (GlcNAc...) asparagine glycosylation is found at N76 and N93. Residues 142–162 form a helical membrane-spanning segment; that stretch reads IWIIIFGVIFCIIIVAIALLI. Residues 163 to 222 are Cytoplasmic-facing; that stretch reads LSGIWQRRRKNKEPSEVDDAEDKCENMITIENGIPSDPLDMKGGHINDAFMTEDERLTPL. 2 positions are modified to phosphothreonine: T214 and T220.

It belongs to the CLTRN family. Monomer. Homodimer; dimerization prevents CLTRN cleavage by BACE2. Interacts with SLC6A18; this interaction regulates the trafficking of SLC6A18 to the cell membrane and its amino acid transporter activity. Interacts with SLC6A19; this interaction regulates the trafficking of SLC6A19 to the cell membrane and its amino acid transporter activity. Interacts with SNAPIN. Glycosylated. Glycosylation is required for plasma membrane localization and for its cleavage by BACE2. Post-translationally, proteolytically processed in pancreatic beta cells by BACE2 leading to the generation and extracellular release of soluble CLTRN, and a corresponding cell-associated C-terminal fragment which is later cleaved by gamma-secretase. This shedding process inactivates CLTRN. Three cleavage sites have been identified for BACE2, two clustered sites after Phe-116 and Leu-118 and a more membrane proximal site at Phe-125; the preferred BACE2 cleavage site seems to be between Phe-125 and Leu-126, Phe-116 and Leu-118 act as alternative sites. As to expression, kidney; collecting ducts. Pancreas; beta cells of islets.

Its subcellular location is the cell membrane. In terms of biological role, plays an important role in amino acid transport by acting as binding partner of amino acid transporters SLC6A18 and SLC6A19, regulating their trafficking on the cell surface and their amino acid transporter activity. May also play a role in trafficking of amino acid transporters SLC3A1 and SLC7A9 to the renal cortical cell membrane. Regulator of SNARE complex function. Stimulator of beta cell replication. The protein is Collectrin of Homo sapiens (Human).